The following is a 256-amino-acid chain: Transcription factor bHLH131 (256 aa).

The region spanning 91 to 140 is the bHLH domain; that stretch reads VAAKKHSDAERRRRLRINSQFATLRTILPNLVKQDKASVLGETVRYFNEL.

As to quaternary structure, homodimer.

Its subcellular location is the nucleus. This is Transcription factor bHLH131 (BHLH131) from Arabidopsis thaliana (Mouse-ear cress).